Consider the following 196-residue polypeptide: Carnitine operon protein CaiE (196 aa).

The tract at residues 173 to 196 (TQPLRQMEENRPRLQGTTDVTPKR) is disordered. Residues 187-196 (QGTTDVTPKR) show a composition bias toward polar residues.

This sequence belongs to the transferase hexapeptide repeat family.

It functions in the pathway amine and polyamine metabolism; carnitine metabolism. Overproduction of CaiE stimulates the activity of CaiB and CaiD. The chain is Carnitine operon protein CaiE from Escherichia coli O157:H7.